A 139-amino-acid chain; its full sequence is Large ribosomal subunit protein bL17 (139 aa).

Belongs to the bacterial ribosomal protein bL17 family. In terms of assembly, part of the 50S ribosomal subunit. Contacts protein L32.

This is Large ribosomal subunit protein bL17 from Cereibacter sphaeroides (strain ATCC 17025 / ATH 2.4.3) (Rhodobacter sphaeroides).